A 354-amino-acid chain; its full sequence is Chorismate synthase (354 aa).

Residue Arg-48 participates in NADP(+) binding. FMN contacts are provided by residues 125-127 (RAS), Gly-277, 292-296 (KPIPS), and Arg-318.

This sequence belongs to the chorismate synthase family. As to quaternary structure, homotetramer. FMNH2 is required as a cofactor.

It catalyses the reaction 5-O-(1-carboxyvinyl)-3-phosphoshikimate = chorismate + phosphate. It functions in the pathway metabolic intermediate biosynthesis; chorismate biosynthesis; chorismate from D-erythrose 4-phosphate and phosphoenolpyruvate: step 7/7. Functionally, catalyzes the anti-1,4-elimination of the C-3 phosphate and the C-6 proR hydrogen from 5-enolpyruvylshikimate-3-phosphate (EPSP) to yield chorismate, which is the branch point compound that serves as the starting substrate for the three terminal pathways of aromatic amino acid biosynthesis. This reaction introduces a second double bond into the aromatic ring system. This is Chorismate synthase from Nitratidesulfovibrio vulgaris (strain ATCC 29579 / DSM 644 / CCUG 34227 / NCIMB 8303 / VKM B-1760 / Hildenborough) (Desulfovibrio vulgaris).